A 367-amino-acid polypeptide reads, in one-letter code: D-alanine--D-alanine ligase (367 aa).

One can recognise an ATP-grasp domain in the interval 145 to 351 (KRLLRDAGLP…QPALMDALIA (207 aa)). 174–229 (HAVGCSELFIKPANLGSSVGISKARTPQEFAAACDLALRFDGKILIERCISPVREI) contributes to the ATP binding site. Positions 306, 318, and 320 each coordinate Mg(2+).

The protein belongs to the D-alanine--D-alanine ligase family. It depends on Mg(2+) as a cofactor. The cofactor is Mn(2+).

It localises to the cytoplasm. It catalyses the reaction 2 D-alanine + ATP = D-alanyl-D-alanine + ADP + phosphate + H(+). Its pathway is cell wall biogenesis; peptidoglycan biosynthesis. Cell wall formation. The protein is D-alanine--D-alanine ligase of Bradyrhizobium sp. (strain BTAi1 / ATCC BAA-1182).